A 278-amino-acid polypeptide reads, in one-letter code: Tryptophan synthase alpha chain (278 aa).

Residues E49 and D60 each act as proton acceptor in the active site.

Belongs to the TrpA family. In terms of assembly, tetramer of two alpha and two beta chains.

The catalysed reaction is (1S,2R)-1-C-(indol-3-yl)glycerol 3-phosphate + L-serine = D-glyceraldehyde 3-phosphate + L-tryptophan + H2O. The protein operates within amino-acid biosynthesis; L-tryptophan biosynthesis; L-tryptophan from chorismate: step 5/5. The alpha subunit is responsible for the aldol cleavage of indoleglycerol phosphate to indole and glyceraldehyde 3-phosphate. In Psychrobacter arcticus (strain DSM 17307 / VKM B-2377 / 273-4), this protein is Tryptophan synthase alpha chain.